The following is a 336-amino-acid chain: Phenylalanine--tRNA ligase alpha subunit (336 aa).

Glutamate 257 contributes to the Mg(2+) binding site.

Belongs to the class-II aminoacyl-tRNA synthetase family. Phe-tRNA synthetase alpha subunit type 1 subfamily. As to quaternary structure, tetramer of two alpha and two beta subunits. Mg(2+) is required as a cofactor.

Its subcellular location is the cytoplasm. It carries out the reaction tRNA(Phe) + L-phenylalanine + ATP = L-phenylalanyl-tRNA(Phe) + AMP + diphosphate + H(+). In Xanthomonas campestris pv. campestris (strain 8004), this protein is Phenylalanine--tRNA ligase alpha subunit.